Reading from the N-terminus, the 343-residue chain is Anthranilate phosphoribosyltransferase (343 aa).

Residues G84, 87–88 (GD), T92, 94–97 (NIST), 112–120 (KHGNRSVSS), and S124 contribute to the 5-phospho-alpha-D-ribose 1-diphosphate site. G84 is a binding site for anthranilate. S96 is a Mg(2+) binding site. Anthranilate is bound at residue N115. R170 is a binding site for anthranilate. Mg(2+) is bound by residues D229 and E230.

This sequence belongs to the anthranilate phosphoribosyltransferase family. As to quaternary structure, homodimer. Mg(2+) serves as cofactor.

The enzyme catalyses N-(5-phospho-beta-D-ribosyl)anthranilate + diphosphate = 5-phospho-alpha-D-ribose 1-diphosphate + anthranilate. The protein operates within amino-acid biosynthesis; L-tryptophan biosynthesis; L-tryptophan from chorismate: step 2/5. Its function is as follows. Catalyzes the transfer of the phosphoribosyl group of 5-phosphorylribose-1-pyrophosphate (PRPP) to anthranilate to yield N-(5'-phosphoribosyl)-anthranilate (PRA). The polypeptide is Anthranilate phosphoribosyltransferase (Stenotrophomonas maltophilia (strain K279a)).